Consider the following 210-residue polypeptide: uncharacterized protein (210 aa).

This is an uncharacterized protein from Fowl adenovirus A serotype 1 (strain CELO / Phelps) (FAdV-1).